Consider the following 763-residue polypeptide: MSVNRCIYLLSRSHIRYRVCASTNLSTVSTLSTTQHSTRRTFDKLSTRHSSSGSSRPLDTSLFIPLPVKTDEDAEGSVGAELTKPLDKNELLKVLNRFYKRKEMQKLASDQGLDARLFHQAFVSFRKYVLEMNSLNADLHIILNDICCGAGHIDDIFPYFMRHAKQIFPMLDCIDDLRKISDLRVPANWYPEARAIQRKIVFHAGPTNSGKTYHAIKRYLEAKSGVYCGPLKLLAHEIYEKSNAAGVPCDLVTGEERIFVDPEGKPSGHIASTIEMCSVTTPYEVAVIDEIQMIKDPARGWAWTRALLGLCAEEIHVCGEAAAVDFITELMFTTGEEVEVHNYKRLTPFSISNHAVESLDNLKPGDCIVCFSKNDIYSISRQIEIRGLECAVIYGSLPPGTKLAQAKKFNDPDDPCKILVATDAIGMGLNLSIRRIIFNSLVKHSLNEKGEKEVDTISTSQALQIAGRAGRFSSVFKEGEVTTMHRDDLPVLKEILGKPVDPIATAGLHPTAEQIEMFAYHLPQATLSNLIDIFVSLSQVDGLYFVCNIDDFKFLADMIQHIPLNLRSRYVFCTAPINKKQPFVCTSFLKFARQFSRDEPLTFNWVCRQVNWPLSPPKNIKDLVHLEAVHDVLDLYLWLSYRFMDMFPDSNQIREIQKELDENIQIGVRNITRLIRAIDSQPTDTESNSSSTVPESETSQRKGRVLRSQNQRKELPRKSSLSSRLLRDGLLTKELLSQLQKEWAREQNEDNSIPVNNGKRKKK.

The transit peptide at 1–65 (MSVNRCIYLL…RPLDTSLFIP (65 aa)) directs the protein to the mitochondrion. The interval 39-58 (RRTFDKLSTRHSSSGSSRPL) is disordered. Residues 192-332 (EARAIQRKIV…AVDFITELMF (141 aa)) form the Helicase ATP-binding domain. Position 205–212 (205–212 (GPTNSGKT)) interacts with ATP. The region spanning 354 to 519 (HAVESLDNLK…PTAEQIEMFA (166 aa)) is the Helicase C-terminal domain. 2 disordered regions span residues 679 to 721 (DSQP…KSSL) and 742 to 763 (EWAREQNEDNSIPVNNGKRKKK). Polar residues predominate over residues 680–697 (SQPTDTESNSSSTVPESE).

This sequence belongs to the helicase family. It depends on Mg(2+) as a cofactor. The cofactor is Mn(2+).

It localises to the nucleus. The protein localises to the mitochondrion matrix. Its subcellular location is the mitochondrion nucleoid. It carries out the reaction ATP + H2O = ADP + phosphate + H(+). Its function is as follows. Major helicase player in mitochondrial RNA metabolism. Component of the mitochondrial degradosome (mtEXO) complex, that degrades 3' overhang double-stranded RNA with a 3'-to-5' directionality in an ATP-dependent manner. ATPase and ATP-dependent multisubstrate helicase, able to unwind double-stranded (ds) DNA and RNA, and RNA/DNA heteroduplexes in the 5'-to-3' direction. Plays a role in the RNA surveillance system in mitochondria; regulates the stability of mature mRNAs, the removal of aberrantly formed mRNAs and the rapid degradation of non coding processing intermediates. Also implicated in recombination and chromatin maintenance pathways. May protect cells from apoptosis. Associates with mitochondrial DNA. This chain is ATP-dependent RNA helicase SUPV3L1, mitochondrial (supv3l1), found in Danio rerio (Zebrafish).